The following is a 462-amino-acid chain: A-type ATP synthase subunit B (462 aa).

The protein belongs to the ATPase alpha/beta chains family. As to quaternary structure, has multiple subunits with at least A(3), B(3), C, D, E, F, H, I and proteolipid K(x).

It is found in the cell membrane. Functionally, component of the A-type ATP synthase that produces ATP from ADP in the presence of a proton gradient across the membrane. The B chain is a regulatory subunit. This Pyrococcus abyssi (strain GE5 / Orsay) protein is A-type ATP synthase subunit B.